Here is a 555-residue protein sequence, read N- to C-terminus: Connector enhancer of kinase suppressor of ras 3 (555 aa).

Residues 7-72 (WSPKQVVDWT…LEAVDLLCAL (66 aa)) enclose the SAM domain. The 95-residue stretch at 80–174 (TMKNLVLKLR…TAVQKDCLIA (95 aa)) folds into the CRIC domain. Residues 211–293 (EVHLPNVRPG…GVVLLLKKRP (83 aa)) form the PDZ domain. Disordered stretches follow at residues 308 to 333 (RWKP…MDAS), 362 to 389 (SFGY…SFLD), and 518 to 538 (PFQE…ASSG). Positions 311 to 329 (PPLVQTSPPPTTTQSPEST) are enriched in low complexity. The 222-residue stretch at 325 to 546 (SPESTMDASL…SGEPSLLVSW (222 aa)) folds into the DUF1170 domain. A phosphoserine mark is found at S381 and S383.

It belongs to the CNKSR family. In terms of assembly, interacts with epithelial sodium channel ENaC. Interacts directly with SCNN1A (ENaC subunit alpha) and SCNN1B (ENaC subunit beta) C-terminal tails. Interacts with ENaC regulatory proteins NEDD4L, RAF1 and SGK1. As to expression, expressed in kidney.

The protein localises to the cytoplasm. It localises to the apical cell membrane. Its function is as follows. Involved in transepithelial sodium transport. Regulates aldosterone-induced and epithelial sodium channel (ENaC)-mediated sodium transport through regulation of ENaC cell surface expression. Acts as a scaffold protein coordinating the assembly of an ENaC-regulatory complex (ERC). This chain is Connector enhancer of kinase suppressor of ras 3 (Cnksr3), found in Mus musculus (Mouse).